The sequence spans 277 residues: Digeranylgeranylglyceryl phosphate synthase (277 aa).

A run of 7 helical transmembrane segments spans residues 16–36, 84–104, 107–127, 146–166, 200–220, 221–241, and 257–277; these read ILAGIVGILGALVAYEGIPDI, ALYYALLQYAIGSILAYFLNI, FVFATIAYFLTFLYGWKLKPL, GAIGVGRIGLAGYLAICAFLV, AIIAAIFGFLTVIASFLPVKV, GIGLGYAPIIIVDIIIIKASI, and LKIATFVAVISFLAGALTKGV.

The protein belongs to the UbiA prenyltransferase family. DGGGP synthase subfamily. It depends on Mg(2+) as a cofactor.

It localises to the cell membrane. The catalysed reaction is sn-3-O-(geranylgeranyl)glycerol 1-phosphate + (2E,6E,10E)-geranylgeranyl diphosphate = 2,3-bis-O-(geranylgeranyl)-sn-glycerol 1-phosphate + diphosphate. Its pathway is membrane lipid metabolism; glycerophospholipid metabolism. In terms of biological role, prenyltransferase that catalyzes the transfer of the geranylgeranyl moiety of geranylgeranyl diphosphate (GGPP) to the C2 hydroxyl of (S)-3-O-geranylgeranylglyceryl phosphate (GGGP). This reaction is the second ether-bond-formation step in the biosynthesis of archaeal membrane lipids. This Pyrococcus furiosus (strain ATCC 43587 / DSM 3638 / JCM 8422 / Vc1) protein is Digeranylgeranylglyceryl phosphate synthase.